Consider the following 352-residue polypeptide: A-type ATP synthase subunit C (352 aa).

The protein belongs to the V-ATPase V0D/AC39 subunit family. As to quaternary structure, has multiple subunits with at least A(3), B(3), C, D, E, F, H, I and proteolipid K(x).

It is found in the cell membrane. Component of the A-type ATP synthase that produces ATP from ADP in the presence of a proton gradient across the membrane. This Halobacterium salinarum (strain ATCC 29341 / DSM 671 / R1) protein is A-type ATP synthase subunit C.